The primary structure comprises 384 residues: Queuine tRNA-ribosyltransferase (384 aa).

The active-site Proton acceptor is the D92. Substrate contacts are provided by residues 92-96 (DSGGF), D146, Q192, and G219. Residues 250-256 (GVGTPAE) form an RNA binding region. D269 serves as the catalytic Nucleophile. The interval 274 to 278 (TRNAR) is RNA binding; important for wobble base 34 recognition. C307, C309, C312, and H338 together coordinate Zn(2+).

The protein belongs to the queuine tRNA-ribosyltransferase family. In terms of assembly, homodimer. Within each dimer, one monomer is responsible for RNA recognition and catalysis, while the other monomer binds to the replacement base PreQ1. Zn(2+) serves as cofactor.

It catalyses the reaction 7-aminomethyl-7-carbaguanine + guanosine(34) in tRNA = 7-aminomethyl-7-carbaguanosine(34) in tRNA + guanine. It participates in tRNA modification; tRNA-queuosine biosynthesis. Catalyzes the base-exchange of a guanine (G) residue with the queuine precursor 7-aminomethyl-7-deazaguanine (PreQ1) at position 34 (anticodon wobble position) in tRNAs with GU(N) anticodons (tRNA-Asp, -Asn, -His and -Tyr). Catalysis occurs through a double-displacement mechanism. The nucleophile active site attacks the C1' of nucleotide 34 to detach the guanine base from the RNA, forming a covalent enzyme-RNA intermediate. The proton acceptor active site deprotonates the incoming PreQ1, allowing a nucleophilic attack on the C1' of the ribose to form the product. After dissociation, two additional enzymatic reactions on the tRNA convert PreQ1 to queuine (Q), resulting in the hypermodified nucleoside queuosine (7-(((4,5-cis-dihydroxy-2-cyclopenten-1-yl)amino)methyl)-7-deazaguanosine). This is Queuine tRNA-ribosyltransferase from Desulfosudis oleivorans (strain DSM 6200 / JCM 39069 / Hxd3) (Desulfococcus oleovorans).